The chain runs to 65 residues: Large ribosomal subunit protein bL35 (65 aa).

It belongs to the bacterial ribosomal protein bL35 family.

The polypeptide is Large ribosomal subunit protein bL35 (Desulforapulum autotrophicum (strain ATCC 43914 / DSM 3382 / VKM B-1955 / HRM2) (Desulfobacterium autotrophicum)).